Consider the following 474-residue polypeptide: tRNA-2-methylthio-N(6)-dimethylallyladenosine synthase (474 aa).

One can recognise an MTTase N-terminal domain in the interval 3–120 (QKLHIKTWGC…LPEMINQIRG (118 aa)). The [4Fe-4S] cluster site is built by C12, C49, C83, C157, C161, and C164. Positions 143–375 (RAEGPTAFVS…QERINQQAAQ (233 aa)) constitute a Radical SAM core domain. Residues 378 to 441 (RRMLGTEQRV…TNSLRGEVVR (64 aa)) form the TRAM domain.

It belongs to the methylthiotransferase family. MiaB subfamily. As to quaternary structure, monomer. [4Fe-4S] cluster is required as a cofactor.

The protein resides in the cytoplasm. It catalyses the reaction N(6)-dimethylallyladenosine(37) in tRNA + (sulfur carrier)-SH + AH2 + 2 S-adenosyl-L-methionine = 2-methylsulfanyl-N(6)-dimethylallyladenosine(37) in tRNA + (sulfur carrier)-H + 5'-deoxyadenosine + L-methionine + A + S-adenosyl-L-homocysteine + 2 H(+). Catalyzes the methylthiolation of N6-(dimethylallyl)adenosine (i(6)A), leading to the formation of 2-methylthio-N6-(dimethylallyl)adenosine (ms(2)i(6)A) at position 37 in tRNAs that read codons beginning with uridine. This is tRNA-2-methylthio-N(6)-dimethylallyladenosine synthase from Haemophilus influenzae (strain PittEE).